We begin with the raw amino-acid sequence, 223 residues long: MAKSQLVSALFVFFFSLSPIYGDFDYMQLVLTWPRSFCYPRGFCNRIPPNNFTIHGLWPDKKPMRGQLQFCTSDDYIKFTPGSVLDALDHHWIQLKFEREIGIRDQPLWKDQYKKHGTCCLPRYNQLQYFLLAMRLKEKFDLLTTLRTHGITPGTKHTFKKIQDAIKTVTQEVPDLKCVENIQGVLELYEIGICFTPEADSLFPCRQSKSCHPTENPLILFRL.

The first 22 residues, 1–22 (MAKSQLVSALFVFFFSLSPIYG), serve as a signal peptide directing secretion. Cys38 and Cys44 are oxidised to a cystine. The N-linked (GlcNAc...) asparagine glycan is linked to Asn51. Residue His55 is the Proton donor of the active site. Residues His55 and 94–95 (QL) contribute to the RNA site. Disulfide bonds link Cys71-Cys119, Cys178-Cys211, and Cys194-Cys205. Gln112 is an active-site residue. 115–116 (KH) contributes to the RNA binding site. The active-site Proton acceptor is the His116.

It belongs to the RNase T2 family. Pistil.

The protein resides in the secreted. Its subcellular location is the extracellular space. It catalyses the reaction a ribonucleotidyl-ribonucleotide-RNA + H2O = a 3'-end 3'-phospho-ribonucleotide-RNA + a 5'-end dephospho-ribonucleoside-RNA + H(+). In terms of biological role, self-incompatibility (SI) is the inherited ability of a flowering plant to prevent self-fertilization by discriminating between self and non-self pollen during pollination. In many species of the Solanaceae, self-incompatibility is controlled by the single, multiallelic locus S. This stylar glycoprotein is associated with expression of self-incompatibility in potato. The polypeptide is Ribonuclease S-2 (Solanum tuberosum (Potato)).